A 158-amino-acid chain; its full sequence is Small ribosomal subunit protein uS7 (158 aa).

Belongs to the universal ribosomal protein uS7 family. In terms of assembly, part of the 30S ribosomal subunit. Contacts proteins S9 and S11.

Functionally, one of the primary rRNA binding proteins, it binds directly to 16S rRNA where it nucleates assembly of the head domain of the 30S subunit. Is located at the subunit interface close to the decoding center, probably blocks exit of the E-site tRNA. This chain is Small ribosomal subunit protein uS7, found in Flavobacterium psychrophilum (strain ATCC 49511 / DSM 21280 / CIP 103535 / JIP02/86).